Consider the following 87-residue polypeptide: Small ribosomal subunit protein uS17 (87 aa).

The protein belongs to the universal ribosomal protein uS17 family. Part of the 30S ribosomal subunit.

One of the primary rRNA binding proteins, it binds specifically to the 5'-end of 16S ribosomal RNA. This chain is Small ribosomal subunit protein uS17, found in Chromobacterium violaceum (strain ATCC 12472 / DSM 30191 / JCM 1249 / CCUG 213 / NBRC 12614 / NCIMB 9131 / NCTC 9757 / MK).